The sequence spans 274 residues: MAIVKCKPTSPGRRFVVKVVNEDLHKGAPYAPLLEAKAKNGGRNNNGRITTRHKGGGHKQKYRVIDFRRNKDGIAGVVERLEYDPNRTAHIALVKYLDGERRYILAPKGLKAEDRIQSGEDAPIKLGNALPLRNIPLGSTIHNVEMKPGKGGQIARSAGTSVQLLAKDGQYVTLRLRSGEMRKVHADCKATIGEVSNSEHSLRSLGKAGAKRWRGVRPTVRGAAMNPVDHPHGGGEGRSSGGRHPVTPWGVPTKGYKTRTNKRTTKMIVRDRRK.

Disordered regions lie at residues 37–59 (KAKN…GGHK) and 222–262 (GAAM…RTNK). Residues 50–59 (TTRHKGGGHK) are compositionally biased toward basic residues.

This sequence belongs to the universal ribosomal protein uL2 family. As to quaternary structure, part of the 50S ribosomal subunit. Forms a bridge to the 30S subunit in the 70S ribosome.

In terms of biological role, one of the primary rRNA binding proteins. Required for association of the 30S and 50S subunits to form the 70S ribosome, for tRNA binding and peptide bond formation. It has been suggested to have peptidyltransferase activity; this is somewhat controversial. Makes several contacts with the 16S rRNA in the 70S ribosome. The polypeptide is Large ribosomal subunit protein uL2 (Alcanivorax borkumensis (strain ATCC 700651 / DSM 11573 / NCIMB 13689 / SK2)).